Reading from the N-terminus, the 307-residue chain is Acetaldehyde dehydrogenase (307 aa).

The active-site Acyl-thioester intermediate is the Cys131. NAD(+) contacts are provided by residues 162-170 and Asn273; that span reads SIGPGTRKN.

Belongs to the acetaldehyde dehydrogenase family.

The enzyme catalyses acetaldehyde + NAD(+) + CoA = acetyl-CoA + NADH + H(+). In Stutzerimonas stutzeri (Pseudomonas stutzeri), this protein is Acetaldehyde dehydrogenase (nahO).